Consider the following 232-residue polypeptide: Putative homeobox protein NANOG2 (232 aa).

The segment at 1–39 (MDLPIQDSHDSSTSPKGKQPTTAEKSATKKEDKVPVKKQ) is disordered. The segment covering 11 to 25 (SSTSPKGKQPTTAEK) has biased composition (polar residues). Basic and acidic residues predominate over residues 26–35 (SATKKEDKVP). A run of 8 repeats spans residues 123-127 (WSNQT), 128-132 (WNNST), 133-137 (WSNQT), 143-147 (WSNHS), 148-152 (WNTQT), 153-157 (WCTQS), 158-162 (WNNQA), and 163-167 (WNSPF). The interval 123-167 (WSNQTWNNSTWSNQTQNIQSWSNHSWNTQTWCTQSWNNQAWNSPF) is 8 X repeats starting with a Trp in each unit. Positions 123–167 (WSNQTWNNSTWSNQTQNIQSWSNHSWNTQTWCTQSWNNQAWNSPF) are sufficient for transactivation activity. Residues 168–232 (YNCGEESLQS…YSMNMQPEDV (65 aa)) are sufficient for strong transactivation activity.

It belongs to the Nanog homeobox family.

It localises to the nucleus. Its function is as follows. Probable transcriptional regulator. The chain is Putative homeobox protein NANOG2 (NANOGP1) from Homo sapiens (Human).